We begin with the raw amino-acid sequence, 275 residues long: Anthracycline biosynthesis protein DauV (275 aa).

VOC domains lie at 8–136 (APAW…VWRK) and 150–263 (SVGW…VVEL).

It participates in antibiotic biosynthesis; daunorubicin biosynthesis. The protein operates within antibiotic biosynthesis; carminomycin biosynthesis. Involved in the biosynthesis of the anthracyclines carminomycin and daunorubicin (daunomycin) which are aromatic polyketide antibiotics that exhibit high cytotoxicity and are widely applied in the chemotherapy of a variety of cancers. Acts jointly with DoxA in the conversion of 13-deoxycarminomycin and 13-deoxydaunorubicin to yield carminomycin and daunorubicin, respectively. This Streptomyces sp. (strain C5) protein is Anthracycline biosynthesis protein DauV (dauV).